A 549-amino-acid polypeptide reads, in one-letter code: ATP synthase subunit alpha (549 aa).

Glycine 172–threonine 179 is a binding site for ATP. The disordered stretch occupies residues serine 513–lysine 549. Residues valine 540 to lysine 549 are compositionally biased toward basic residues.

Belongs to the ATPase alpha/beta chains family. In terms of assembly, F-type ATPases have 2 components, CF(1) - the catalytic core - and CF(0) - the membrane proton channel. CF(1) has five subunits: alpha(3), beta(3), gamma(1), delta(1), epsilon(1). CF(0) has three main subunits: a(1), b(2) and c(9-12). The alpha and beta chains form an alternating ring which encloses part of the gamma chain. CF(1) is attached to CF(0) by a central stalk formed by the gamma and epsilon chains, while a peripheral stalk is formed by the delta and b chains.

The protein localises to the cell membrane. The enzyme catalyses ATP + H2O + 4 H(+)(in) = ADP + phosphate + 5 H(+)(out). Functionally, produces ATP from ADP in the presence of a proton gradient across the membrane. The alpha chain is a regulatory subunit. The sequence is that of ATP synthase subunit alpha from Mycobacterium ulcerans (strain Agy99).